A 593-amino-acid polypeptide reads, in one-letter code: uncharacterized protein (593 aa).

This is an uncharacterized protein from Sinorhizobium fredii (strain NBRC 101917 / NGR234).